The following is a 60-amino-acid chain: Large ribosomal subunit protein uL30 (60 aa).

Belongs to the universal ribosomal protein uL30 family. As to quaternary structure, part of the 50S ribosomal subunit.

In Streptococcus pyogenes serotype M1, this protein is Large ribosomal subunit protein uL30.